A 604-amino-acid polypeptide reads, in one-letter code: Linalool synthase Tps-5042L13, chloroplastic (604 aa).

The transit peptide at 1-34 (MSSMRIYVAIMKKPSVKHVDNVDKKASKPSWRVS) directs the protein to the chloroplast. Residues R323, D360, D364, R501, and D504 each contribute to the (2E)-geranyl diphosphate site. Mg(2+) is bound by residues D360 and D364. The DDXXD motif signature appears at 360–364 (DDVYD). The Mg(2+) site is built by D504, T508, and E512.

This sequence belongs to the terpene synthase family. Tpsb subfamily. Monomer. Mg(2+) is required as a cofactor. Requires Mn(2+) as cofactor.

The protein localises to the plastid. It is found in the chloroplast. The catalysed reaction is (2E)-geranyl diphosphate + H2O = linalool + diphosphate. The protein operates within secondary metabolite biosynthesis; terpenoid biosynthesis. Monoterpene synthase (mono-TPS) involved in the biosynthesis of monoterpenes natural products. Catalyzes the conversion of (2E)-geranyl diphosphate (GPP) into linalool. The sequence is that of Linalool synthase Tps-5042L13, chloroplastic from Perilla frutescens (Beefsteak mint).